The chain runs to 536 residues: Chaperonin GroEL (536 aa).

ATP-binding positions include 29–32 (TLGP), 86–90 (DGTTT), G413, and D494.

Belongs to the chaperonin (HSP60) family. As to quaternary structure, forms a cylinder of 14 subunits composed of two heptameric rings stacked back-to-back. Interacts with the co-chaperonin GroES.

The protein localises to the cytoplasm. It catalyses the reaction ATP + H2O + a folded polypeptide = ADP + phosphate + an unfolded polypeptide.. In terms of biological role, together with its co-chaperonin GroES, plays an essential role in assisting protein folding. The GroEL-GroES system forms a nano-cage that allows encapsulation of the non-native substrate proteins and provides a physical environment optimized to promote and accelerate protein folding. This chain is Chaperonin GroEL, found in Acholeplasma laidlawii (strain PG-8A).